The sequence spans 297 residues: Protein CANDIDATE G-PROTEIN COUPLED RECEPTOR 8 (297 aa).

N-linked (GlcNAc...) asparagine glycosylation occurs at Asn-20. 7 helical membrane passes run 34–54 (GFLHNTVLVAASLFFVAYLAY), 70–90 (IMIAYYGCLWLVSLLNLAWCC), 107–127 (LTLFTTSGMLFLEVSLVAFLF), 142–162 (FLISGFIVALDLLLKAIFLFG), 180–200 (WGLWIIHKLLLTGVYGMVFLM), 215–235 (FYNYIIIMFALYSLYLVASAF), and 242–262 (FGFWLYGIMSVCYHALYLPLL).

Belongs to the UPF0359 family.

The protein resides in the membrane. Its function is as follows. G-protein coupled receptor. Plays a role in plants and microbes interactions. The sequence is that of Protein CANDIDATE G-PROTEIN COUPLED RECEPTOR 8 from Arabidopsis thaliana (Mouse-ear cress).